A 570-amino-acid polypeptide reads, in one-letter code: Proline--tRNA ligase (570 aa).

Belongs to the class-II aminoacyl-tRNA synthetase family. ProS type 1 subfamily. Homodimer.

Its subcellular location is the cytoplasm. It catalyses the reaction tRNA(Pro) + L-proline + ATP = L-prolyl-tRNA(Pro) + AMP + diphosphate. Functionally, catalyzes the attachment of proline to tRNA(Pro) in a two-step reaction: proline is first activated by ATP to form Pro-AMP and then transferred to the acceptor end of tRNA(Pro). As ProRS can inadvertently accommodate and process non-cognate amino acids such as alanine and cysteine, to avoid such errors it has two additional distinct editing activities against alanine. One activity is designated as 'pretransfer' editing and involves the tRNA(Pro)-independent hydrolysis of activated Ala-AMP. The other activity is designated 'posttransfer' editing and involves deacylation of mischarged Ala-tRNA(Pro). The misacylated Cys-tRNA(Pro) is not edited by ProRS. This is Proline--tRNA ligase from Clostridium botulinum (strain Eklund 17B / Type B).